The sequence spans 660 residues: DNA mismatch repair protein MutL (660 aa).

Belongs to the DNA mismatch repair MutL/HexB family.

This protein is involved in the repair of mismatches in DNA. It is required for dam-dependent methyl-directed DNA mismatch repair. May act as a 'molecular matchmaker', a protein that promotes the formation of a stable complex between two or more DNA-binding proteins in an ATP-dependent manner without itself being part of a final effector complex. The protein is DNA mismatch repair protein MutL of Streptococcus pyogenes serotype M12 (strain MGAS2096).